We begin with the raw amino-acid sequence, 109 residues long: Sperm-specific class P protein 16 (109 aa).

The MSP domain maps to 2-109 (SLTADPPACT…TVTIPMSATA (108 aa)).

Expressed at higher level in testis.

The chain is Sperm-specific class P protein 16 (ssp-16) from Caenorhabditis elegans.